We begin with the raw amino-acid sequence, 475 residues long: Sulfate adenylyltransferase subunit 1 (475 aa).

The tr-type G domain occupies 25–239; that stretch reads KSLLRFLTCG…EVLETVEIQR (215 aa). The G1 stretch occupies residues 34–41; the sequence is GSVDDGKS. 34 to 41 is a GTP binding site; sequence GSVDDGKS. The tract at residues 92–96 is G2; it reads GITID. The segment at 113-116 is G3; sequence DTPG. GTP contacts are provided by residues 113-117 and 168-171; these read DTPGH and NKMD. The interval 168–171 is G4; sequence NKMD. The G5 stretch occupies residues 206 to 208; it reads SAL.

This sequence belongs to the TRAFAC class translation factor GTPase superfamily. Classic translation factor GTPase family. CysN/NodQ subfamily. Heterodimer composed of CysD, the smaller subunit, and CysN.

The enzyme catalyses sulfate + ATP + H(+) = adenosine 5'-phosphosulfate + diphosphate. It functions in the pathway sulfur metabolism; hydrogen sulfide biosynthesis; sulfite from sulfate: step 1/3. In terms of biological role, with CysD forms the ATP sulfurylase (ATPS) that catalyzes the adenylation of sulfate producing adenosine 5'-phosphosulfate (APS) and diphosphate, the first enzymatic step in sulfur assimilation pathway. APS synthesis involves the formation of a high-energy phosphoric-sulfuric acid anhydride bond driven by GTP hydrolysis by CysN coupled to ATP hydrolysis by CysD. This Shigella flexneri serotype 5b (strain 8401) protein is Sulfate adenylyltransferase subunit 1.